A 230-amino-acid polypeptide reads, in one-letter code: Sugar fermentation stimulation protein homolog (230 aa).

Belongs to the SfsA family.

The chain is Sugar fermentation stimulation protein homolog from Clostridium botulinum (strain ATCC 19397 / Type A).